Here is a 227-residue protein sequence, read N- to C-terminus: Cytochrome c oxidase subunit 2 (227 aa).

Topologically, residues M1 to S14 are mitochondrial intermembrane. Residues P15 to M45 traverse the membrane as a helical segment. At L46–Q59 the chain is on the mitochondrial matrix side. Residues E60–M87 traverse the membrane as a helical segment. Over D88 to I227 the chain is Mitochondrial intermembrane. 6 residues coordinate Cu cation: H161, C196, E198, C200, H204, and M207. E198 contributes to the Mg(2+) binding site. Y218 is modified (phosphotyrosine).

Belongs to the cytochrome c oxidase subunit 2 family. Component of the cytochrome c oxidase (complex IV, CIV), a multisubunit enzyme composed of 14 subunits. The complex is composed of a catalytic core of 3 subunits MT-CO1, MT-CO2 and MT-CO3, encoded in the mitochondrial DNA, and 11 supernumerary subunits COX4I, COX5A, COX5B, COX6A, COX6B, COX6C, COX7A, COX7B, COX7C, COX8 and NDUFA4, which are encoded in the nuclear genome. The complex exists as a monomer or a dimer and forms supercomplexes (SCs) in the inner mitochondrial membrane with NADH-ubiquinone oxidoreductase (complex I, CI) and ubiquinol-cytochrome c oxidoreductase (cytochrome b-c1 complex, complex III, CIII), resulting in different assemblies (supercomplex SCI(1)III(2)IV(1) and megacomplex MCI(2)III(2)IV(2)). Found in a complex with TMEM177, COA6, COX18, COX20, SCO1 and SCO2. Interacts with TMEM177 in a COX20-dependent manner. Interacts with COX20. Interacts with COX16. Cu cation serves as cofactor.

It localises to the mitochondrion inner membrane. It catalyses the reaction 4 Fe(II)-[cytochrome c] + O2 + 8 H(+)(in) = 4 Fe(III)-[cytochrome c] + 2 H2O + 4 H(+)(out). Component of the cytochrome c oxidase, the last enzyme in the mitochondrial electron transport chain which drives oxidative phosphorylation. The respiratory chain contains 3 multisubunit complexes succinate dehydrogenase (complex II, CII), ubiquinol-cytochrome c oxidoreductase (cytochrome b-c1 complex, complex III, CIII) and cytochrome c oxidase (complex IV, CIV), that cooperate to transfer electrons derived from NADH and succinate to molecular oxygen, creating an electrochemical gradient over the inner membrane that drives transmembrane transport and the ATP synthase. Cytochrome c oxidase is the component of the respiratory chain that catalyzes the reduction of oxygen to water. Electrons originating from reduced cytochrome c in the intermembrane space (IMS) are transferred via the dinuclear copper A center (CU(A)) of subunit 2 and heme A of subunit 1 to the active site in subunit 1, a binuclear center (BNC) formed by heme A3 and copper B (CU(B)). The BNC reduces molecular oxygen to 2 water molecules using 4 electrons from cytochrome c in the IMS and 4 protons from the mitochondrial matrix. This chain is Cytochrome c oxidase subunit 2 (MT-CO2), found in Conilurus penicillatus (Brush-tailed rabbit-rat).